The following is a 76-amino-acid chain: uncharacterized protein (76 aa).

This is an uncharacterized protein from Saccharomyces cerevisiae (strain ATCC 204508 / S288c) (Baker's yeast).